A 561-amino-acid polypeptide reads, in one-letter code: DNA ligase (561 aa).

ATP is bound at residue glutamate 253. Lysine 255 acts as the N6-AMP-lysine intermediate in catalysis. ATP contacts are provided by arginine 260, arginine 275, glutamate 304, phenylalanine 344, arginine 421, and lysine 427.

The protein belongs to the ATP-dependent DNA ligase family. Mg(2+) is required as a cofactor.

The catalysed reaction is ATP + (deoxyribonucleotide)n-3'-hydroxyl + 5'-phospho-(deoxyribonucleotide)m = (deoxyribonucleotide)n+m + AMP + diphosphate.. Its function is as follows. DNA ligase that seals nicks in double-stranded DNA during DNA replication, DNA recombination and DNA repair. This Halobacterium salinarum (strain ATCC 29341 / DSM 671 / R1) protein is DNA ligase.